Here is an 878-residue protein sequence, read N- to C-terminus: Pyruvate, phosphate dikinase (878 aa).

An N-terminal region spans residues 1-347; sequence MKKLIYYFGS…LYILQTRTAK (347 aa). R96 is a binding site for ATP. Positions 348–404 are linker 1; the sequence is RTAIAAINIAVQMVEEKLISKEQALMRIDPESLNQLLHTRIDYSKGLTSIAEGLPAS. Residues 405–502 form a central region; it reads PGAATGIAVF…VIKQGDIITI (98 aa). Position 457 is a phosphothreonine; by PDRP1 (T457). Residue H459 is the Tele-phosphohistidine intermediate of the active site. The interval 503-537 is linker 2; it reads DGGSGKIFLGEMPLIQPTFSEESKLILDWADEISS. The C-terminal stretch occupies residues 538 to 878; sequence LKVRANAETV…AAAQAKIKHG (341 aa). Substrate is bound by residues R565, R621, E749, G770, T771, N772, and D773. Mg(2+) is bound at residue E749. Residue D773 coordinates Mg(2+). C835 acts as the Proton donor in catalysis.

This sequence belongs to the PEP-utilizing enzyme family. Homodimer. Requires Mg(2+) as cofactor. In terms of processing, phosphorylation of Thr-457 in the dark inactivates the enzyme. Dephosphorylation upon light stimulation reactivates the enzyme.

It catalyses the reaction pyruvate + phosphate + ATP = phosphoenolpyruvate + AMP + diphosphate + H(+). Its activity is regulated as follows. Activated by light-induced dephosphorylation. Inhibited by dark-induced phosphorylation. Both reactions are catalyzed by PDRP1. Catalyzes the reversible phosphorylation of pyruvate and phosphate. The sequence is that of Pyruvate, phosphate dikinase (ppdK) from Rickettsia conorii (strain ATCC VR-613 / Malish 7).